The chain runs to 126 residues: Large ribosomal subunit protein bL17 (126 aa).

Belongs to the bacterial ribosomal protein bL17 family. As to quaternary structure, part of the 50S ribosomal subunit. Contacts protein L32.

The sequence is that of Large ribosomal subunit protein bL17 from Magnetococcus marinus (strain ATCC BAA-1437 / JCM 17883 / MC-1).